We begin with the raw amino-acid sequence, 176 residues long: Shikimate kinase (176 aa).

12–17 (GSGKST) provides a ligand contact to ATP. Serine 16 is a Mg(2+) binding site. Residues aspartate 34, arginine 58, and glycine 80 each contribute to the substrate site. Arginine 117 contributes to the ATP binding site. Arginine 136 lines the substrate pocket. Arginine 153 is a binding site for ATP.

This sequence belongs to the shikimate kinase family. As to quaternary structure, monomer. Mg(2+) is required as a cofactor.

Its subcellular location is the cytoplasm. It carries out the reaction shikimate + ATP = 3-phosphoshikimate + ADP + H(+). It functions in the pathway metabolic intermediate biosynthesis; chorismate biosynthesis; chorismate from D-erythrose 4-phosphate and phosphoenolpyruvate: step 5/7. In terms of biological role, catalyzes the specific phosphorylation of the 3-hydroxyl group of shikimic acid using ATP as a cosubstrate. In Mycobacterium avium (strain 104), this protein is Shikimate kinase.